The chain runs to 396 residues: Elongation factor Tu (396 aa).

Residues 10–206 (KPHVNVGTIG…ALDSYIPTPE (197 aa)) enclose the tr-type G domain. Positions 19-26 (GHVDHGKT) are G1. 19–26 (GHVDHGKT) contributes to the GTP binding site. Mg(2+) is bound at residue T26. Residues 60–64 (GITIN) form a G2 region. Residues 81 to 84 (DCPG) form a G3 region. Residues 81–85 (DCPGH) and 136–139 (NKCD) each bind GTP. A G4 region spans residues 136–139 (NKCD). Residues 174-176 (SAL) form a G5 region.

Belongs to the TRAFAC class translation factor GTPase superfamily. Classic translation factor GTPase family. EF-Tu/EF-1A subfamily. Monomer.

The protein resides in the cytoplasm. It carries out the reaction GTP + H2O = GDP + phosphate + H(+). GTP hydrolase that promotes the GTP-dependent binding of aminoacyl-tRNA to the A-site of ribosomes during protein biosynthesis. The protein is Elongation factor Tu of Aromatoleum aromaticum (strain DSM 19018 / LMG 30748 / EbN1) (Azoarcus sp. (strain EbN1)).